Consider the following 3430-residue polypeptide: Genome polyprotein (3430 aa).

The interval serine 2–asparagine 15 is interaction with host EXOC1. Residues serine 2 to arginine 105 are Cytoplasmic-facing. The interval leucine 37–valine 72 is hydrophobic; homodimerization of capsid protein C. The propeptide at glycine 106–alanine 123 is ER anchor for the capsid protein C, removed in mature form by serine protease NS3. Residues glycine 106–leucine 126 form a helical membrane-spanning segment. Residues serine 127–glutamate 248 lie on the Extracellular side of the membrane. An N-linked (GlcNAc...) asparagine; by host glycan is attached at asparagine 138. Residues serine 249–glycine 269 traverse the membrane as a helical segment. The Cytoplasmic portion of the chain corresponds to serine 270–arginine 275. The chain crosses the membrane as a helical span at residues valine 276 to serine 290. The Extracellular segment spans residues phenylalanine 291 to leucine 739. Intrachain disulfides connect cysteine 293-cysteine 320, cysteine 350-cysteine 406, cysteine 364-cysteine 395, cysteine 382-cysteine 411, cysteine 476-cysteine 574, and cysteine 591-cysteine 622. Positions aspartate 388 to glycine 401 are fusion peptide. Residues phenylalanine 740–isoleucine 760 traverse the membrane as a helical segment. Residues asparagine 761–serine 766 are Cytoplasmic-facing. Residues isoleucine 767 to alanine 787 traverse the membrane as a helical segment. Over aspartate 788–aspartate 1212 the chain is Extracellular. 2 disulfides stabilise this stretch: cysteine 791/cysteine 802 and cysteine 842/cysteine 930. Residues asparagine 917, asparagine 962, and asparagine 994 are each glycosylated (N-linked (GlcNAc...) asparagine; by host). 4 cysteine pairs are disulfide-bonded: cysteine 966–cysteine 1010, cysteine 1067–cysteine 1116, cysteine 1078–cysteine 1099, and cysteine 1100–cysteine 1103. Residues valine 1213–phenylalanine 1233 traverse the membrane as a helical segment. At leucine 1234–serine 1243 the chain is on the cytoplasmic side. A helical membrane pass occupies residues isoleucine 1244–leucine 1264. Residues serine 1265–alanine 1278 lie on the Lumenal side of the membrane. The helical transmembrane segment at tryptophan 1279–alanine 1299 threads the bilayer. Over leucine 1300 to cysteine 1307 the chain is Cytoplasmic. The helical transmembrane segment at leucine 1308–glutamate 1328 threads the bilayer. Over lysine 1329 to cysteine 1340 the chain is Lumenal. Residues leucine 1341–leucine 1361 form a helical membrane-spanning segment. The Cytoplasmic portion of the chain corresponds to methionine 1362 to glycine 1371. A helical membrane pass occupies residues tryptophan 1372 to alanine 1392. Residues glutamate 1393 to aspartate 1395 lie on the Lumenal side of the membrane. The helical transmembrane segment at isoleucine 1396 to serine 1416 threads the bilayer. Topologically, residues glycine 1417–alanine 1473 are cytoplasmic. Residues isoleucine 1424–alanine 1463 are interacts with and activates NS3 protease. The segment at residues cysteine 1474–isoleucine 1494 is an intramembrane region (helical). Topologically, residues threonine 1495–alanine 2170 are cytoplasmic. The Peptidase S7 domain occupies glycine 1502–glycine 1679. Catalysis depends on charge relay system; for serine protease NS3 activity residues histidine 1552, aspartate 1576, and serine 1636. Positions proline 1682–glutamine 1838 constitute a Helicase ATP-binding domain. Residues arginine 1686–glutamine 1689 form an important for RNA-binding region. Leucine 1695–threonine 1702 is a binding site for ATP. The DEAH box motif lies at aspartate 1786–histidine 1789. Positions glycine 1849–glutamate 2014 constitute a Helicase C-terminal domain. The residue at position 1890 (lysine 1890) is an N6-acetyllysine; by host. Residues glutamate 2165–aspartate 2169 are regulates the ATPase activity of NS3 helicase. Residues leucine 2171–leucine 2191 form a helical membrane-spanning segment. Residues methionine 2192–glycine 2196 lie on the Lumenal side of the membrane. Positions isoleucine 2197–alanine 2217 form an intramembrane region, helical. Glutamate 2218 is a topological domain (lumenal). A helical membrane pass occupies residues valine 2219–isoleucine 2239. Topologically, residues proline 2240–alanine 2254 are cytoplasmic. Residues valine 2255–leucine 2275 form a helical membrane-spanning segment. The Lumenal segment spans residues aspartate 2276–alanine 2309. The segment at residues threonine 2310–isoleucine 2330 is an intramembrane region (helical). Over threonine 2331–threonine 2377 the chain is Lumenal. Residues leucine 2378–glycine 2398 form a helical membrane-spanning segment. Residues tryptophan 2399–lysine 2441 lie on the Cytoplasmic side of the membrane. A helical membrane pass occupies residues lysine 2442–valine 2462. Residues arginine 2463–glutamate 2467 lie on the Lumenal side of the membrane. Residues alanine 2468–tryptophan 2488 form a helical membrane-spanning segment. Over asparagine 2489–leucine 3430 the chain is Cytoplasmic. The mRNA cap 0-1 NS5-type MT domain maps to glycine 2526 to alanine 2791. Residue serine 2581 coordinates S-adenosyl-L-methionine. Serine 2581 bears the Phosphoserine mark. Lysine 2586 (for 2'-O-MTase activity) is an active-site residue. S-adenosyl-L-methionine-binding residues include glycine 2611, tryptophan 2612, threonine 2629, lysine 2630, aspartate 2656, and valine 2657. Aspartate 2671 acts as the For 2'-O-MTase activity in catalysis. Position 2672 (isoleucine 2672) interacts with S-adenosyl-L-methionine. Catalysis depends on for 2'-O-MTase activity residues lysine 2707 and glutamate 2743. Tyrosine 2745 lines the S-adenosyl-L-methionine pocket. The Nuclear localization signal signature appears at arginine 2914–lysine 2916. The Zn(2+) site is built by glutamate 2965, histidine 2969, cysteine 2974, and cysteine 2977. A RdRp catalytic domain is found at glycine 3055–serine 3207. 3 residues coordinate Zn(2+): histidine 3242, cysteine 3258, and cysteine 3377. Positions threonine 3428–leucine 3430 match the PDZ-binding motif.

In the N-terminal section; belongs to the class I-like SAM-binding methyltransferase superfamily. mRNA cap 0-1 NS5-type methyltransferase family. Homodimer. Interacts (via N-terminus) with host EXOC1 (via C-terminus); this interaction results in EXOC1 degradation through the proteasome degradation pathway. Interacts with host DDX56; this interaction plays an important role in genomic RNA encapsidation. As to quaternary structure, forms heterodimers with envelope protein E in the endoplasmic reticulum and Golgi. In terms of assembly, homodimer; in the endoplasmic reticulum and Golgi. Homodimer; Homohexamer when secreted. Interacts with envelope protein E. NS1 interacts with NS4B. Interacts with host complement protein CFH; this interaction leads to the degradation of C3. As to quaternary structure, interacts (via N-terminus) with serine protease NS3. In terms of assembly, forms a heterodimer with serine protease NS3. May form homooligomers. Forms a heterodimer with NS2B. Interacts with NS4B. Interacts with unphosphorylated RNA-directed RNA polymerase NS5; this interaction stimulates RNA-directed RNA polymerase NS5 guanylyltransferase activity. As to quaternary structure, interacts with Serine protease/Helicase NS3. Interacts with NS1. In terms of assembly, homodimer. Interacts with host STAT2; this interaction inhibits the phosphorylation of the latter, and, when all viral proteins are present (polyprotein), targets STAT2 for degradation. Interacts with host PAF1 complex. Specific enzymatic cleavages in vivo yield mature proteins. Cleavages in the lumen of endoplasmic reticulum are performed by host signal peptidase, whereas cleavages in the cytoplasmic side are performed by serine protease NS3. Signal cleavage at the 2K-4B site requires a prior NS3 protease-mediated cleavage at the 4A-2K site. Post-translationally, cleaved in post-Golgi vesicles by a host furin, releasing the mature small envelope protein M, and peptide pr. This cleavage is incomplete as up to 30% of viral particles still carry uncleaved prM. In terms of processing, not N-glycosylated. N-glycosylated. The excreted form is glycosylated and this is required for efficient secretion of the protein from infected cells. Post-translationally, acetylated by host KAT5. Acetylation modulates NS3 RNA-binding and unwinding activities and plays an important positive role for viral replication. In terms of processing, phosphorylated on serines residues. This phosphorylation may trigger NS5 nuclear localization.

The protein localises to the virion. It is found in the host nucleus. It localises to the host cytoplasm. The protein resides in the host perinuclear region. Its subcellular location is the secreted. The protein localises to the virion membrane. It is found in the host endoplasmic reticulum membrane. It catalyses the reaction Selective hydrolysis of -Xaa-Xaa-|-Yaa- bonds in which each of the Xaa can be either Arg or Lys and Yaa can be either Ser or Ala.. The enzyme catalyses RNA(n) + a ribonucleoside 5'-triphosphate = RNA(n+1) + diphosphate. The catalysed reaction is a ribonucleoside 5'-triphosphate + H2O = a ribonucleoside 5'-diphosphate + phosphate + H(+). It carries out the reaction ATP + H2O = ADP + phosphate + H(+). It catalyses the reaction a 5'-end (5'-triphosphoguanosine)-ribonucleoside in mRNA + S-adenosyl-L-methionine = a 5'-end (N(7)-methyl 5'-triphosphoguanosine)-ribonucleoside in mRNA + S-adenosyl-L-homocysteine. The enzyme catalyses a 5'-end (N(7)-methyl 5'-triphosphoguanosine)-ribonucleoside in mRNA + S-adenosyl-L-methionine = a 5'-end (N(7)-methyl 5'-triphosphoguanosine)-(2'-O-methyl-ribonucleoside) in mRNA + S-adenosyl-L-homocysteine + H(+). Plays a role in virus budding by binding to the cell membrane and gathering the viral RNA into a nucleocapsid that forms the core of a mature virus particle. During virus entry, may induce genome penetration into the host cytoplasm after hemifusion induced by the surface proteins. Can migrate to the cell nucleus where it modulates host functions. Overcomes the anti-viral effects of host EXOC1 by sequestering and degrading the latter through the proteasome degradation pathway. Its function is as follows. Inhibits RNA silencing by interfering with host Dicer. Functionally, prevents premature fusion activity of envelope proteins in trans-Golgi by binding to envelope protein E at pH6.0. After virion release in extracellular space, gets dissociated from E dimers. In terms of biological role, acts as a chaperone for envelope protein E during intracellular virion assembly by masking and inactivating envelope protein E fusion peptide. prM is the only viral peptide matured by host furin in the trans-Golgi network probably to avoid catastrophic activation of the viral fusion activity in acidic Golgi compartment prior to virion release. prM-E cleavage is inefficient, and many virions are only partially matured. These uncleaved prM would play a role in immune evasion. May play a role in virus budding. Exerts cytotoxic effects by activating a mitochondrial apoptotic pathway through M ectodomain. May display a viroporin activity. Its function is as follows. Binds to host cell surface receptor and mediates fusion between viral and cellular membranes. Envelope protein is synthesized in the endoplasmic reticulum in the form of heterodimer with protein prM. They play a role in virion budding in the ER, and the newly formed immature particle is covered with 60 spikes composed of heterodimer between precursor prM and envelope protein E. The virion is transported to the Golgi apparatus where the low pH causes dissociation of PrM-E heterodimers and formation of E homodimers. prM-E cleavage is inefficient, and many virions are only partially matured. These uncleaved prM would play a role in immune evasion. Functionally, involved in immune evasion, pathogenesis and viral replication. Once cleaved off the polyprotein, is targeted to three destinations: the viral replication cycle, the plasma membrane and the extracellular compartment. Essential for viral replication. Required for formation of the replication complex and recruitment of other non-structural proteins to the ER-derived membrane structures. Excreted as a hexameric lipoparticle that plays a role against host immune response. Antagonizing the complement function. Binds to the host macrophages and dendritic cells. Inhibits signal transduction originating from Toll-like receptor 3 (TLR3). In terms of biological role, component of the viral RNA replication complex that functions in virion assembly and antagonizes the host alpha/beta interferon antiviral response. Required cofactor for the serine protease function of NS3. May have membrane-destabilizing activity and form viroporins. Its function is as follows. Displays three enzymatic activities: serine protease, NTPase and RNA helicase. NS3 serine protease, in association with NS2B, performs its autocleavage and cleaves the polyprotein at dibasic sites in the cytoplasm: C-prM, NS2A-NS2B, NS2B-NS3, NS3-NS4A, NS4A-2K and NS4B-NS5. NS3 RNA helicase binds RNA and unwinds dsRNA in the 3' to 5' direction. NS3 supports the separation of RNA daughter and template strands during viral replication. The helicase part is involved in the inhibition of phosphorylation of host STAT1, and thereby inhibition of host type-I IFN signaling. In addition, NS3 assists the initiation of replication by unwinding the RNA secondary structure in the 3' non-translated region (NTR). Inhibits STAT2 translocation in the nucleus after IFN-alpha treatment. Functionally, regulates the ATPase activity of the NS3 helicase activity. NS4A allows NS3 helicase to conserve energy during unwinding. In terms of biological role, functions as a signal peptide for NS4B and is required for the interferon antagonism activity of the latter. Induces the formation of ER-derived membrane vesicles where the viral replication takes place. Inhibits interferon (IFN)-induced host STAT1 phosphorylation and nuclear translocation, thereby preventing the establishment of cellular antiviral state by blocking the IFN-alpha/beta pathway. Inhibits STAT2 translocation in the nucleus after IFN-alpha treatment. Its function is as follows. Replicates the viral (+) and (-) RNA genome, and performs the capping of genomes in the cytoplasm. NS5 methylates viral RNA cap at guanine N-7 and ribose 2'-O positions. Besides its role in RNA genome replication, also prevents the establishment of cellular antiviral state by blocking the interferon-alpha/beta (IFN-alpha/beta) signaling pathway. Inhibits host TYK2 and STAT2 phosphorylation, thereby preventing activation of JAK-STAT signaling pathway. This is Genome polyprotein from Aedes (Tropical bont tick).